The primary structure comprises 527 residues: MNISIFLIGFVFFMGGISVWLMPTFKLGIFFLEWDFLSLKFNFYFNSILFSFILFLVTFSVLVFSTYYLNSELNFNYYYFVLLIFVGSMFSLNFSNSIFTMLLSWDLLGISSFFLVLFYNNWDSCSGAMNTALTNRLGDYFMFVFFGLSVFSGYYFLSFSMFSSYMSLLLLLTAFTKSAQFPFSSWLPKAMSAPTPVSSLVHSSTLVTAGLILLMNFNNLVMQKDFISFVLIIGLFTMFFSSLASLVEEDLKKVVALSTLSQMGFSMVTLGLGLSFISFIHLVSHALFKSCLFMQVGYIIHCSFGQQDGRNYSNNGNLPNFIQLQMLVTLFCLCGLIFSSGAVSKDFILELFFSNNYMMFFSLMFFVSVFLTFGYSFRLWKSFFLSFNKVMNHYSSTVFMNFLSLVLVIFSISFLWWMNFNLLNIPSLFLYVDFFGPLVFLFMMIFLSFLILKMLFKELMYKFLVDYLAKNSIYKMKNLKFMDLFLNNINSKGYTLFLSSGMFKNYYLKSLNFNSVVVLIFIFFMIC.

Helical transmembrane passes span 3–23, 43–63, 75–95, 98–118, 141–161, 168–188, 197–217, 226–246, 263–283, 318–338, 357–377, 398–418, 432–452, and 507–527; these read ISIF…WLMP, FYFN…SVLV, FNYY…LNFS, IFTM…LVLF, FMFV…SFSM, LLLL…SWLP, VSSL…LMNF, FISF…LASL, MGFS…IHLV, LPNF…GLIF, YMMF…GYSF, VFMN…LWWM, VDFF…FLIL, and YLKS…FMIC.

It belongs to the complex I subunit 5 family.

The protein localises to the mitochondrion inner membrane. The enzyme catalyses a ubiquinone + NADH + 5 H(+)(in) = a ubiquinol + NAD(+) + 4 H(+)(out). Functionally, core subunit of the mitochondrial membrane respiratory chain NADH dehydrogenase (Complex I) that is believed to belong to the minimal assembly required for catalysis. Complex I functions in the transfer of electrons from NADH to the respiratory chain. The immediate electron acceptor for the enzyme is believed to be ubiquinone. The polypeptide is NADH-ubiquinone oxidoreductase chain 5 (Caenorhabditis elegans).